The primary structure comprises 166 residues: Small ribosomal subunit protein uS9 (166 aa).

Positions 1-16 are enriched in acidic residues; it reads MSDTTNEVEETYEVDE. The segment at 1–45 is disordered; that stretch reads MSDTTNEVEETYEVDEQGIAYSSESAPSADAPLRPATIAPANATG.

The protein belongs to the universal ribosomal protein uS9 family.

This is Small ribosomal subunit protein uS9 from Nocardioides sp. (strain ATCC BAA-499 / JS614).